A 98-amino-acid polypeptide reads, in one-letter code: NADH-ubiquinone oxidoreductase chain 4L (98 aa).

3 helical membrane passes run 1–21 (MTMV…GLLM), 29–49 (SLLC…VTIL), and 61–81 (IILL…LVMV).

Belongs to the complex I subunit 4L family. Core subunit of respiratory chain NADH dehydrogenase (Complex I) which is composed of 45 different subunits.

It localises to the mitochondrion inner membrane. It carries out the reaction a ubiquinone + NADH + 5 H(+)(in) = a ubiquinol + NAD(+) + 4 H(+)(out). Core subunit of the mitochondrial membrane respiratory chain NADH dehydrogenase (Complex I) which catalyzes electron transfer from NADH through the respiratory chain, using ubiquinone as an electron acceptor. Part of the enzyme membrane arm which is embedded in the lipid bilayer and involved in proton translocation. The chain is NADH-ubiquinone oxidoreductase chain 4L (MT-ND4L) from Neomonachus schauinslandi (Hawaiian monk seal).